Consider the following 405-residue polypeptide: Probable tRNA sulfurtransferase (405 aa).

Residues 60–165 (DAVINRLKKV…SNGIFLTSEV (106 aa)) enclose the THUMP domain. ATP-binding positions include 183-184 (ML), 208-209 (HF), Arg-265, Gly-287, and Gln-296.

The protein belongs to the ThiI family.

It is found in the cytoplasm. The enzyme catalyses [ThiI sulfur-carrier protein]-S-sulfanyl-L-cysteine + a uridine in tRNA + 2 reduced [2Fe-2S]-[ferredoxin] + ATP + H(+) = [ThiI sulfur-carrier protein]-L-cysteine + a 4-thiouridine in tRNA + 2 oxidized [2Fe-2S]-[ferredoxin] + AMP + diphosphate. It catalyses the reaction [ThiS sulfur-carrier protein]-C-terminal Gly-Gly-AMP + S-sulfanyl-L-cysteinyl-[cysteine desulfurase] + AH2 = [ThiS sulfur-carrier protein]-C-terminal-Gly-aminoethanethioate + L-cysteinyl-[cysteine desulfurase] + A + AMP + 2 H(+). It participates in cofactor biosynthesis; thiamine diphosphate biosynthesis. Its function is as follows. Catalyzes the ATP-dependent transfer of a sulfur to tRNA to produce 4-thiouridine in position 8 of tRNAs, which functions as a near-UV photosensor. Also catalyzes the transfer of sulfur to the sulfur carrier protein ThiS, forming ThiS-thiocarboxylate. This is a step in the synthesis of thiazole, in the thiamine biosynthesis pathway. The sulfur is donated as persulfide by IscS. This chain is Probable tRNA sulfurtransferase, found in Pediococcus pentosaceus (strain ATCC 25745 / CCUG 21536 / LMG 10740 / 183-1w).